We begin with the raw amino-acid sequence, 175 residues long: ATP synthase subunit b (175 aa).

A helical membrane pass occupies residues 14–34 (LSPNPGLIFWTTVSFVIVLLI).

Belongs to the ATPase B chain family. As to quaternary structure, F-type ATPases have 2 components, F(1) - the catalytic core - and F(0) - the membrane proton channel. F(1) has five subunits: alpha(3), beta(3), gamma(1), delta(1), epsilon(1). F(0) has four main subunits: a(1), b(2) and c(10-14). The alpha and beta chains form an alternating ring which encloses part of the gamma chain. F(1) is attached to F(0) by a central stalk formed by the gamma and epsilon chains, while a peripheral stalk is formed by the delta and b chains.

Its subcellular location is the cell inner membrane. In terms of biological role, f(1)F(0) ATP synthase produces ATP from ADP in the presence of a proton or sodium gradient. F-type ATPases consist of two structural domains, F(1) containing the extramembraneous catalytic core and F(0) containing the membrane proton channel, linked together by a central stalk and a peripheral stalk. During catalysis, ATP synthesis in the catalytic domain of F(1) is coupled via a rotary mechanism of the central stalk subunits to proton translocation. Component of the F(0) channel, it forms part of the peripheral stalk, linking F(1) to F(0). The polypeptide is ATP synthase subunit b (Chlorobium phaeobacteroides (strain DSM 266 / SMG 266 / 2430)).